The following is a 22-amino-acid chain: KNWAVLVAGSDGLPNYRHHADV.

The protein belongs to the peptidase C13 family.

It carries out the reaction Hydrolysis of proteins and small molecule substrates at -Asn-|-Xaa- bonds.. The chain is Hemoglobinase-like protein 2 from Fasciola hepatica (Liver fluke).